We begin with the raw amino-acid sequence, 315 residues long: Putative HTH-type transcriptional regulatory protein PF1851 (315 aa).

The 59-residue stretch at 131–189 (LRELREKYGYSTTELAEMLGVSRKSVQRYEKGEGMVSIDVAIRLEEIFDEPLVKPIDIF) folds into the HTH cro/C1-type domain. The H-T-H motif DNA-binding region spans 142-161 (TTELAEMLGVSRKSVQRYEK).

The chain is Putative HTH-type transcriptional regulatory protein PF1851 from Pyrococcus furiosus (strain ATCC 43587 / DSM 3638 / JCM 8422 / Vc1).